The following is a 209-amino-acid chain: Ribosomal RNA large subunit methyltransferase E (209 aa).

G63, W65, D83, D99, and D124 together coordinate S-adenosyl-L-methionine. The active-site Proton acceptor is K164.

The protein belongs to the class I-like SAM-binding methyltransferase superfamily. RNA methyltransferase RlmE family.

It localises to the cytoplasm. It catalyses the reaction uridine(2552) in 23S rRNA + S-adenosyl-L-methionine = 2'-O-methyluridine(2552) in 23S rRNA + S-adenosyl-L-homocysteine + H(+). Functionally, specifically methylates the uridine in position 2552 of 23S rRNA at the 2'-O position of the ribose in the fully assembled 50S ribosomal subunit. This Shewanella amazonensis (strain ATCC BAA-1098 / SB2B) protein is Ribosomal RNA large subunit methyltransferase E.